Here is a 200-residue protein sequence, read N- to C-terminus: Oligoribonuclease (200 aa).

The region spanning 20–183 (LVWLDMEMTG…ADIHESIDEL (164 aa)) is the Exonuclease domain. The active site involves tyrosine 141.

The protein belongs to the oligoribonuclease family.

It is found in the cytoplasm. Its function is as follows. 3'-to-5' exoribonuclease specific for small oligoribonucleotides. This is Oligoribonuclease from Burkholderia vietnamiensis (strain G4 / LMG 22486) (Burkholderia cepacia (strain R1808)).